Reading from the N-terminus, the 663-residue chain is DNA topoisomerase 1 (663 aa).

The 134-residue stretch at 4–137 (SWLIITEKDN…TVKVDRVRYS (134 aa)) folds into the Toprim domain. Mg(2+) contacts are provided by glutamate 10 and aspartate 106. A Topo IA-type catalytic domain is found at 155 to 558 (DFNLANAALA…ESREMLLQIL (404 aa)). The interval 193-198 (SVGRVQ) is interaction with DNA. Tyrosine 306 acts as the O-(5'-phospho-DNA)-tyrosine intermediate in catalysis. A C4-type 1 zinc finger spans residues 583 to 610 (CPECGGELVVRQSKAGKRFIGCSNYPDC). Residues 629 to 653 (CKEHEIKEVKIRTKKGYWNLGCPYC) form a C4-type 2; atypical zinc finger.

Belongs to the type IA topoisomerase family. In terms of assembly, monomer. Mg(2+) is required as a cofactor.

It carries out the reaction ATP-independent breakage of single-stranded DNA, followed by passage and rejoining.. Releases the supercoiling and torsional tension of DNA, which is introduced during the DNA replication and transcription, by transiently cleaving and rejoining one strand of the DNA duplex. Introduces a single-strand break via transesterification at a target site in duplex DNA. The scissile phosphodiester is attacked by the catalytic tyrosine of the enzyme, resulting in the formation of a DNA-(5'-phosphotyrosyl)-enzyme intermediate and the expulsion of a 3'-OH DNA strand. The free DNA strand then undergoes passage around the unbroken strand, thus removing DNA supercoils. Finally, in the religation step, the DNA 3'-OH attacks the covalent intermediate to expel the active-site tyrosine and restore the DNA phosphodiester backbone. In Archaeoglobus fulgidus (strain ATCC 49558 / DSM 4304 / JCM 9628 / NBRC 100126 / VC-16), this protein is DNA topoisomerase 1.